A 496-amino-acid chain; its full sequence is Lysine--tRNA ligase (496 aa).

Mg(2+)-binding residues include Glu-409 and Glu-416.

The protein belongs to the class-II aminoacyl-tRNA synthetase family. As to quaternary structure, homodimer. The cofactor is Mg(2+).

The protein localises to the cytoplasm. It carries out the reaction tRNA(Lys) + L-lysine + ATP = L-lysyl-tRNA(Lys) + AMP + diphosphate. This chain is Lysine--tRNA ligase, found in Streptococcus thermophilus (strain ATCC BAA-491 / LMD-9).